Here is an 812-residue protein sequence, read N- to C-terminus: Endogenous retrovirus group K member 18 Pol protein (812 aa).

One can recognise a Reverse transcriptase domain in the interval 57-245 (LEKGHIEPSF…TPFHYLGMQI (189 aa)). The LPQG signature appears at 161–164 (LPQG). The YXDD motif lies at 195-198 (YFDD). In terms of domain architecture, RNase H type-1 spans 460 to 590 (LENALTVFTD…ADLLVSSAFI (131 aa)). Residues D469, E497, D517, and D582 each contribute to the Mg(2+) site. The segment at 587–628 (SAFIKAQELHALTHVNAAGLKNKFDVTWKQAKDIVQHCTQCQ) adopts an Integrase-type zinc-finger fold. Zn(2+) contacts are provided by H596, H600, C624, and C627. The region spanning 637-803 (AGVNPEVCVL…TSAEHLTGKK (167 aa)) is the Integrase catalytic domain.

The protein belongs to the beta type-B retroviral polymerase family. HERV class-II K(HML-2) pol subfamily.

It catalyses the reaction DNA(n) + a 2'-deoxyribonucleoside 5'-triphosphate = DNA(n+1) + diphosphate. The catalysed reaction is Endonucleolytic cleavage to 5'-phosphomonoester.. Early post-infection, the reverse transcriptase converts the viral RNA genome into double-stranded viral DNA. The RNase H domain of the reverse transcriptase performs two functions. It degrades the RNA template and specifically removes the RNA primer from the RNA/DNA hybrid. Following nuclear import, the integrase catalyzes the insertion of the linear, double-stranded viral DNA into the host cell chromosome. Endogenous Pol proteins may have kept, lost or modified their original function during evolution. This is Endogenous retrovirus group K member 18 Pol protein (ERVK-18) from Homo sapiens (Human).